The primary structure comprises 653 residues: Fusexin 1 (653 aa).

The N-terminal stretch at M1–A24 is a signal peptide. Topologically, residues A25 to N559 are extracellular. Cystine bridges form between C129/C167, C398/C441, C468/C487, and C499/C516. The segment at D155 to S160 is fusion loop. The chain crosses the membrane as a helical span at residues A560 to V580. The Cytoplasmic segment spans residues G581–R604. 2 consecutive transmembrane segments (helical) span residues L605–D625 and P626–A646. At S647–L653 the chain is on the cytoplasmic side.

This sequence belongs to the HAP2/GCS1 family. Fusexin 1 subfamily. In terms of assembly, homotrimer stabilized by interdomain contacts and numerous Ca(2+) and Na(+) ions.

The protein localises to the cell surface. It localises to the cell membrane. In terms of biological role, exhibits fusogenic activity. Mediates cell-cell fusion in mammalian cells (bilateral fusion). The sequence is that of Fusexin 1 from Haloplanus natans (strain DSM 17983 / JCM 14081 / CGMCC 1.8972 / RE-101).